The sequence spans 435 residues: Enolase (435 aa).

Q163 is a binding site for (2R)-2-phosphoglycerate. Catalysis depends on E205, which acts as the Proton donor. The Mg(2+) site is built by D243, E292, and D319. Residues K344, R373, S374, and K395 each coordinate (2R)-2-phosphoglycerate. Catalysis depends on K344, which acts as the Proton acceptor.

This sequence belongs to the enolase family. It depends on Mg(2+) as a cofactor.

It is found in the cytoplasm. The protein localises to the secreted. Its subcellular location is the cell surface. It carries out the reaction (2R)-2-phosphoglycerate = phosphoenolpyruvate + H2O. It participates in carbohydrate degradation; glycolysis; pyruvate from D-glyceraldehyde 3-phosphate: step 4/5. Catalyzes the reversible conversion of 2-phosphoglycerate (2-PG) into phosphoenolpyruvate (PEP). It is essential for the degradation of carbohydrates via glycolysis. In Streptococcus equi subsp. zooepidemicus (strain MGCS10565), this protein is Enolase.